The following is a 292-amino-acid chain: Phosphatidylglycerol--prolipoprotein diacylglyceryl transferase (292 aa).

The next 3 helical transmembrane spans lie at 18–38, 67–87, and 105–125; these read LFGVTFALRWYALAYIAGLLI, LLTWVILGVILGGRLGFVLFY, and GGMSFHGGFLGVMTALVAFCL. R150 is a binding site for a 1,2-diacyl-sn-glycero-3-phospho-(1'-sn-glycerol). 3 helical membrane-spanning segments follow: residues 193-213, 222-242, and 266-286; these read QIYEAGLEGILLFTVLSLLVW, GSVSGMFLAGYGATRFLVEFV, and GLTMGQILSLPMILLGLYLIL.

The protein belongs to the Lgt family.

It is found in the cell inner membrane. The enzyme catalyses L-cysteinyl-[prolipoprotein] + a 1,2-diacyl-sn-glycero-3-phospho-(1'-sn-glycerol) = an S-1,2-diacyl-sn-glyceryl-L-cysteinyl-[prolipoprotein] + sn-glycerol 1-phosphate + H(+). Its pathway is protein modification; lipoprotein biosynthesis (diacylglyceryl transfer). Catalyzes the transfer of the diacylglyceryl group from phosphatidylglycerol to the sulfhydryl group of the N-terminal cysteine of a prolipoprotein, the first step in the formation of mature lipoproteins. The polypeptide is Phosphatidylglycerol--prolipoprotein diacylglyceryl transferase (Cereibacter sphaeroides (strain ATCC 17023 / DSM 158 / JCM 6121 / CCUG 31486 / LMG 2827 / NBRC 12203 / NCIMB 8253 / ATH 2.4.1.) (Rhodobacter sphaeroides)).